We begin with the raw amino-acid sequence, 400 residues long: DNA primase small subunit PriS (400 aa).

Catalysis depends on residues Asp98, Asp100, and Asp306.

It belongs to the eukaryotic-type primase small subunit family. Heterodimer of a small subunit (PriS) and a large subunit (PriL). Requires Mg(2+) as cofactor. The cofactor is Mn(2+).

Its function is as follows. Catalytic subunit of DNA primase, an RNA polymerase that catalyzes the synthesis of short RNA molecules used as primers for DNA polymerase during DNA replication. The small subunit contains the primase catalytic core and has DNA synthesis activity on its own. Binding to the large subunit stabilizes and modulates the activity, increasing the rate of DNA synthesis while decreasing the length of the DNA fragments, and conferring RNA synthesis capability. The DNA polymerase activity may enable DNA primase to also catalyze primer extension after primer synthesis. May also play a role in DNA repair. In Methanocella arvoryzae (strain DSM 22066 / NBRC 105507 / MRE50), this protein is DNA primase small subunit PriS.